We begin with the raw amino-acid sequence, 177 residues long: Large ribosomal subunit protein uL6 (177 aa).

Belongs to the universal ribosomal protein uL6 family. In terms of assembly, part of the 50S ribosomal subunit.

This protein binds to the 23S rRNA, and is important in its secondary structure. It is located near the subunit interface in the base of the L7/L12 stalk, and near the tRNA binding site of the peptidyltransferase center. The sequence is that of Large ribosomal subunit protein uL6 from Erythrobacter litoralis (strain HTCC2594).